Here is a 653-residue protein sequence, read N- to C-terminus: MASGSKASVPADSFRTISPDRRGEKSASAVSGDTAAATTLKGTAIPVRSVVASPRPVKGKAGRETARLRLQRLPAAQAEDTGEAAAAAAEEPLLPVPEDEEEAQPLPPVCVSRMRGMWRDEKVSLYCDEVLQDCKAEDADEVMGKYLSEKLKLKDKWLGVWKTNPSVFFVKYEEASIPFVGILVEVTCEPYQDSSSRFKVTVSVAEPFSSNIANIPRDLVDEILEELEHSVPLLEVYPVEGQDTDIHVIALALEVVRFFYDFLWRDWDDEESCENYTALIEERINLWCDIQDGTIPGPIAQRFKKTLEKYKNKRVELIEYQSNIKEDPSAAEAVECWKKYYEIVMLCGLLKMWEDLRLRVHGPFFPRILRRRKGKREFGKTITHIVAKMMTTEMIKDLSSDTLLQQHGDLDLALDNCYSGDTVIIFPGEYQAANLALLTDDIIIKGVGKREEIMITSEPSRDSFVVSKADNVKLMHLSLIQQGTVDGIVVVESGHMTLENCILKCEGTGVCVLTGAALTITDSEITGAQGAGVELYPGSIAILERNEIHHCNNLRTSNSSKSTLGGVNMKVLPAPKLKMTNNHIYSNKGYGVSILQPMEQFFIVAEEALNKRASSGDKKDDKMLFKVMQNLNLEMNNNKIEANVKGDIRIVTS.

The segment at 1-65 is disordered; the sequence is MASGSKASVP…PVKGKAGRET (65 aa). Ser8 bears the Phosphoserine mark. A compositionally biased stretch (polar residues) spans 28–41; that stretch reads SAVSGDTAAATTLK. Residues 46–56 are compositionally biased toward low complexity; the sequence is PVRSVVASPRP. Phosphoserine is present on Ser53. The stretch at 299 to 326 forms a coiled coil; sequence IAQRFKKTLEKYKNKRVELIEYQSNIKE. 4 PbH1 repeats span residues 493 to 514, 515 to 537, 538 to 571, and 574 to 596; these read SGHM…CVLT, GAAL…ELYP, GSIA…NMKV, and APKL…SILQ. An N6-acetyllysine modification is found at Lys570. At Lys645 the chain carries N6-acetyllysine.

In terms of assembly, interacts with HSPA2; this interaction may promote the recruitment of HSPA2 to the spindle. In terms of tissue distribution, expressed in spermatocytes and elongating spermatids inside the seminiferous tubules (at protein level). Testis-specific.

It is found in the cytoplasm. Its subcellular location is the cytoskeleton. It localises to the spindle. Its function is as follows. Testis-specific spindle-associated factor that plays a role in spermatogenesis. In association with HSPA2, participates in the maintenance of spindle integrity during meiosis in male germ cells. This Homo sapiens (Human) protein is Testicular spindle-associated protein SHCBP1L.